A 215-amino-acid polypeptide reads, in one-letter code: Cytochrome b6 (215 aa).

The helical transmembrane segment at 32–52 threads the bilayer; the sequence is IFYCLGGITLTCFLVQVATGF. Cysteine 35 contributes to the heme c binding site. Residues histidine 86 and histidine 100 each coordinate heme b. Helical transmembrane passes span 90 to 110, 116 to 136, and 186 to 206; these read ASMMVLMMILHVFRVYLTGGF, LTWVTGVVLGVLTASFGVTGY, and LHTFVLPLLTAVFMLMHFPMI. Heme b-binding residues include histidine 187 and histidine 202.

This sequence belongs to the cytochrome b family. PetB subfamily. The 4 large subunits of the cytochrome b6-f complex are cytochrome b6, subunit IV (17 kDa polypeptide, PetD), cytochrome f and the Rieske protein, while the 4 small subunits are PetG, PetL, PetM and PetN. The complex functions as a dimer. Heme b is required as a cofactor. Heme c serves as cofactor.

It is found in the plastid. The protein resides in the chloroplast thylakoid membrane. Component of the cytochrome b6-f complex, which mediates electron transfer between photosystem II (PSII) and photosystem I (PSI), cyclic electron flow around PSI, and state transitions. The chain is Cytochrome b6 from Jasminum nudiflorum (Winter jasmine).